We begin with the raw amino-acid sequence, 392 residues long: Xyloside xylosyltransferase 1 (392 aa).

Over 1 to 19 (MGLLRGGAACARAMARLGA) the chain is Cytoplasmic. The chain crosses the membrane as a helical; Signal-anchor for type II membrane protein span at residues 20–42 (LRSHYCALLLAAALAVCAFYYLG). Topologically, residues 43–392 (SGRETFSSAT…GNCNTPIPED (350 aa)) are lumenal. 103–105 (MFT) lines the UDP-alpha-D-xylose pocket. Asp225 provides a ligand contact to Mn(2+). Residue Leu226 participates in UDP-alpha-D-xylose binding. Residue Asp227 coordinates Mn(2+). The segment at 262 to 265 (HTFW) is interaction with target proteins. Positions 289, 327, and 330 each coordinate UDP-alpha-D-xylose. 2 residues coordinate a glycoprotein: Gln330 and Trp359. 2 disulfide bridges follow: Cys349–Cys374 and Cys356–Cys385. His382 provides a ligand contact to Mn(2+). Asn384 contacts a glycoprotein.

The protein belongs to the glycosyltransferase 8 family. Homodimer. Dimer formation may be essential for the retention in endoplasmic reticulum. The cofactor is Mg(2+). Mn(2+) is required as a cofactor.

The protein resides in the endoplasmic reticulum membrane. The enzyme catalyses 3-O-[alpha-D-xylosyl-(1-&gt;3)-beta-D-glucosyl]-L-seryl-[EGF-like domain protein] + UDP-alpha-D-xylose = 3-O-[alpha-D-xylosyl-(1-&gt;3)-alpha-D-xylosyl-(1-&gt;3)-beta-D-glucosyl]-L-seryl-[EGF-like domain protein] + UDP + H(+). In terms of biological role, alpha-1,3-xylosyltransferase, which elongates the O-linked xylose-glucose disaccharide attached to EGF-like repeats in the extracellular domain of target proteins by catalyzing the addition of the second xylose. Known targets include Notch proteins and coagulation factors, such as F9. The polypeptide is Xyloside xylosyltransferase 1 (Xxylt1) (Mus musculus (Mouse)).